An 88-amino-acid chain; its full sequence is Acylphosphatase (88 aa).

The region spanning 3–88 (AARFIFTGVV…IPTTEAFVTG (86 aa)) is the Acylphosphatase-like domain. Residues R18 and N36 contribute to the active site.

It belongs to the acylphosphatase family.

It carries out the reaction an acyl phosphate + H2O = a carboxylate + phosphate + H(+). The polypeptide is Acylphosphatase (acyP) (Xanthomonas campestris pv. campestris (strain 8004)).